The primary structure comprises 264 residues: Thymidylate synthase (264 aa).

Arginine 21 contacts dUMP. Histidine 51 serves as a coordination point for (6R)-5,10-methylene-5,6,7,8-tetrahydrofolate. 126–127 is a binding site for dUMP; it reads RR. Catalysis depends on cysteine 146, which acts as the Nucleophile. DUMP is bound by residues 166–169, asparagine 177, and 207–209; these read RSAD and HLY. Aspartate 169 lines the (6R)-5,10-methylene-5,6,7,8-tetrahydrofolate pocket. Position 263 (alanine 263) interacts with (6R)-5,10-methylene-5,6,7,8-tetrahydrofolate.

It belongs to the thymidylate synthase family. Bacterial-type ThyA subfamily. Homodimer.

The protein localises to the cytoplasm. The catalysed reaction is dUMP + (6R)-5,10-methylene-5,6,7,8-tetrahydrofolate = 7,8-dihydrofolate + dTMP. The protein operates within pyrimidine metabolism; dTTP biosynthesis. Catalyzes the reductive methylation of 2'-deoxyuridine-5'-monophosphate (dUMP) to 2'-deoxythymidine-5'-monophosphate (dTMP) while utilizing 5,10-methylenetetrahydrofolate (mTHF) as the methyl donor and reductant in the reaction, yielding dihydrofolate (DHF) as a by-product. This enzymatic reaction provides an intracellular de novo source of dTMP, an essential precursor for DNA biosynthesis. This Ralstonia nicotianae (strain ATCC BAA-1114 / GMI1000) (Ralstonia solanacearum) protein is Thymidylate synthase.